The following is a 216-amino-acid chain: MVLVLSPRLVNQFCDVLKIKEGRTSLNTTCMDSFSLLSMVLWRIFTEQSNLKSKSTSLKDIPIPGFFTKIFVMASSSMELNVIVIGIVNDPLLMSWGMVKLGVSCSLINKRFDSMTVCIRNIASLHEILQIPLARDLGCVIMSRSRISSCGIVGKSTFCTLIPLFKISNFFLDGEFKAVDNFSRIRSLKELSPNTASLNLNDMTMLKFLAVVFFLL.

This is an uncharacterized protein from Saccharomyces cerevisiae (strain ATCC 204508 / S288c) (Baker's yeast).